Consider the following 136-residue polypeptide: Calmodulin-A (136 aa).

4 EF-hand domains span residues 1-36, 37-72, 74-109, and 110-136; these read EQIA…LGQN, PTEA…KMKD, DSEE…LGEK, and LTDE…EEFV. Residues Asp-14, Asp-16, Asp-18, Thr-20, Glu-25, Asp-50, Asp-52, Asn-54, Thr-56, Glu-61, Asp-87, Asp-89, Asn-91, Tyr-93, and Glu-98 each coordinate Ca(2+). Residue Lys-109 is modified to N6,N6,N6-trimethyllysine. Asp-123, Asp-125, Asp-127, Gln-129, and Glu-134 together coordinate Ca(2+).

Belongs to the calmodulin family.

Calmodulin acts as part of a calcium signal transduction pathway by mediating the control of a large number of enzymes, ion channels, aquaporins and other proteins through calcium-binding. Calcium-binding is required for the activation of calmodulin. Among the enzymes to be stimulated by the calmodulin-calcium complex are a number of protein kinases, such as myosin light-chain kinases and calmodulin-dependent protein kinase type II (CaMK2), and phosphatases. The chain is Calmodulin-A (calm1) from Oryzias latipes (Japanese rice fish).